Consider the following 110-residue polypeptide: Multidrug transporter PA4990 (110 aa).

The next 4 membrane-spanning stretches (helical) occupy residues 7 to 27, 31 to 51, 58 to 78, and 85 to 105; these read LAIA…VAGF, LPLL…VLVM, VVYA…AMFV, and PAAL…QLFS.

Belongs to the drug/metabolite transporter (DMT) superfamily. Small multidrug resistance (SMR) (TC 2.A.7.1) family.

The protein resides in the cell membrane. Its function is as follows. Confers resistance to ethidium bromide, acriflavine and methyl viologen. This Pseudomonas aeruginosa (strain ATCC 15692 / DSM 22644 / CIP 104116 / JCM 14847 / LMG 12228 / 1C / PRS 101 / PAO1) protein is Multidrug transporter PA4990.